The chain runs to 550 residues: Thioredoxin domain-containing protein 2 (550 aa).

Positions 1–50 (MFKKNQKLSKDKGLEVNSVQAGAPEESDVKLNNGGKANERGSNEFLDTAQ) are disordered. Phosphoserine occurs at positions 42 and 51. Positions 63-428 (MLHMSTEESE…IKSSEDVQPS (366 aa)) are disordered. 3 stretches are compositionally biased toward polar residues: residues 73-87 (PPQQVSSTSMFSENT), 96-105 (PKSSTKNTQL), and 112-140 (KTSSYSKQTNSSNIPKSLAITTYPKQGST). 22 consecutive repeat copies span residues 104–118 (QLKQEDISKTSSYSK), 119–133 (QTNSSNIPKSLAITT), 134–148 (YPKQGSTLKPAANGT), 149–163 (HDREAEKPKSSEDLI), 164–178 (QSKKGDIFKPSEDSI), 179–193 (QSKKGDMPKSSEDPI), 194–208 (QSKKDDTAKSLEDTI), 209–223 (QSKNGDMPKSSEDPI), 224–238 (QSKKDDTARSLEDSI), 239–252 (QSKKGDMPKSSDTI), 253–267 (QSKESETPKFLQDTI), 268–282 (QSKGGKINKQVKDSM), 283–297 (KSKESKIRKPLKDSI), 298–312 (QSKENKIPKSSQDSA), 313–327 (QPKEGKIHKPLKDSL), 328–342 (PSKEGDISKPSEDTI), 343–357 (QAKEEITVSPEDTIQ), 358–384 (AKEEITMSPEDTIQAKEEITVSPEDTI), 385–399 (QAKEEITVSPEDTMQ), 400–412 (SKEEITVSPEDTV), 413–425 (QSQEGDIKSSEDV), and 426–440 (QPSENEIFPFEAEIE). The 22 X 15 AA approximate tandem repeat of Q-P-K-X-G-D-I-P-K-S-[PS]-E-[KE]-X-I stretch occupies residues 104–440 (QLKQEDISKT…EIFPFEAEIE (337 aa)). 4 stretches are compositionally biased toward basic and acidic residues: residues 148 to 205 (THDR…KSLE), 217 to 259 (KSSE…ESET), 277 to 304 (QVKDSMKSKESKIRKPLKDSIQSKENKI), and 313 to 348 (QPKEGKIHKPLKDSLPSKEGDISKPSEDTIQAKEEI). S158 carries the phosphoserine modification. Phosphoserine occurs at positions 351 and 379. Residues 401-550 (KEEITVSPED…KLEKSIAELK (150 aa)) enclose the Thioredoxin domain. S407 carries the phosphoserine modification. An intrachain disulfide couples C477 to C480.

In terms of tissue distribution, testis-specific. Strongly expressed in the testicular seminiferous tubules, mostly in the round spermatids.

It is found in the cytoplasm. Functionally, probably plays a regulatory role in sperm development. May participate in regulation of fibrous sheath (FS) assembly by supporting the formation of disulfide bonds during sperm tail morphogenesis. May also be required to rectify incorrect disulfide pairing and generate suitable pairs between the FS constituents. Can reduce disulfide bonds in vitro in the presence of NADP and thioredoxin reductase. This chain is Thioredoxin domain-containing protein 2 (Txndc2), found in Rattus norvegicus (Rat).